The following is a 75-amino-acid chain: Accessory gland-specific peptide 57Da (75 aa).

A signal peptide spans Met-1–Ala-19. Residues Ala-55–Ser-75 are disordered. A compositionally biased stretch (low complexity) spans Ala-56–Ser-75.

In terms of tissue distribution, lumen fluid of male accessory glands, becomes seminal fluid.

Its subcellular location is the secreted. Its function is as follows. Transferred from male to female during mating and may affect egglaying and behavior after mating. This is Accessory gland-specific peptide 57Da (Mst57Da) from Drosophila melanogaster (Fruit fly).